The following is a 610-amino-acid chain: UvrABC system protein C (610 aa).

The region spanning 16-94 is the GIY-YIG domain; sequence SQPGVYSMYD…IKLYQPRYNV (79 aa). The UVR domain maps to 204–239; it reads QQVLNQLVERMELASRALNFEDAAHARDQIQAVRRV.

The protein belongs to the UvrC family. As to quaternary structure, interacts with UvrB in an incision complex.

It is found in the cytoplasm. The UvrABC repair system catalyzes the recognition and processing of DNA lesions. UvrC both incises the 5' and 3' sides of the lesion. The N-terminal half is responsible for the 3' incision and the C-terminal half is responsible for the 5' incision. The protein is UvrABC system protein C of Sodalis glossinidius (strain morsitans).